The chain runs to 92 residues: Small ribosomal subunit protein uS19 (92 aa).

It belongs to the universal ribosomal protein uS19 family.

Its function is as follows. Protein S19 forms a complex with S13 that binds strongly to the 16S ribosomal RNA. This Granulibacter bethesdensis (strain ATCC BAA-1260 / CGDNIH1) protein is Small ribosomal subunit protein uS19.